The following is a 156-amino-acid chain: Small ribosomal subunit protein uS7 (156 aa).

It belongs to the universal ribosomal protein uS7 family. Part of the 30S ribosomal subunit. Contacts proteins S9 and S11.

Functionally, one of the primary rRNA binding proteins, it binds directly to 16S rRNA where it nucleates assembly of the head domain of the 30S subunit. Is located at the subunit interface close to the decoding center, probably blocks exit of the E-site tRNA. The polypeptide is Small ribosomal subunit protein uS7 (Picosynechococcus sp. (strain ATCC 27264 / PCC 7002 / PR-6) (Agmenellum quadruplicatum)).